We begin with the raw amino-acid sequence, 302 residues long: Forkhead box protein R2 (302 aa).

Residues 183–285 constitute a DNA-binding region (fork-head); it reads RPPLNYSHLV…RVLAYARRES (103 aa).

It is found in the nucleus. The polypeptide is Forkhead box protein R2 (Foxr2) (Mus musculus (Mouse)).